A 273-amino-acid chain; its full sequence is MEANMPKRKEPGRSLRIKVISMGNAEVGKSCIIKRYCEKRFVSKYLATIGIDYGVTKVHVRDREIKVNIFDMAGHPFFYEVRNEFYKDTQGVILVYDVGQKDSFDALDAWLAEMKQELGPHGNMENIIFVVCANKIDCTKHRCVDESEGRLWAESKGFLYFETSAQTGEGINEMFQTFYISIVDLCENGGKRPTTNSSASFTKEQADAIRRIRNSKDSWDMLGVKPGASRDEVNKAYRKLAVLLHPDKCVAPGSEDAFKAVVNARTALLKNIK.

The segment at 1–18 (MEANMPKRKEPGRSLRIK) is required for interaction with MAPK1. GTP contacts are provided by residues 23 to 30 (GNAEVGKS), 71 to 75 (DMAGH), and 134 to 137 (NKID). The J domain maps to 217–273 (DSWDMLGVKPGASRDEVNKAYRKLAVLLHPDKCVAPGSEDAFKAVVNARTALLKNIK).

Belongs to the small GTPase superfamily. Rab family. As to quaternary structure, interacts directly with MAPK1 (wild-type and kinase-deficient forms). Interacts directly (in GTP-bound form) with MAP2K1 (wild-type and kinase-deficient forms). As to expression, overexpressed in gastrointestinal cancers; expression correlates with later tumor-node-metastasis stages of colorectal cancers.

The protein localises to the nucleus. In terms of biological role, GTPase which can activate the MEK/ERK pathway and induce cell transformation when overexpressed. May act as a nuclear scaffold for MAPK1, probably by association with MAPK1 nuclear export signal leading to enhanced ERK1/ERK2 signaling. This is DnaJ homolog subfamily C member 27 (DNAJC27) from Homo sapiens (Human).